The following is a 309-amino-acid chain: Homoserine O-succinyltransferase (309 aa).

Cys-142 (acyl-thioester intermediate) is an active-site residue. Residues Lys-163 and Ser-192 each contribute to the substrate site. His-235 acts as the Proton acceptor in catalysis. Glu-237 is a catalytic residue. Position 249 (Arg-249) interacts with substrate.

The protein belongs to the MetA family. Homodimer.

The protein resides in the cytoplasm. The enzyme catalyses L-homoserine + succinyl-CoA = O-succinyl-L-homoserine + CoA. Its pathway is amino-acid biosynthesis; L-methionine biosynthesis via de novo pathway; O-succinyl-L-homoserine from L-homoserine: step 1/1. Its function is as follows. Transfers a succinyl group from succinyl-CoA to L-homoserine, forming succinyl-L-homoserine. The sequence is that of Homoserine O-succinyltransferase from Salmonella gallinarum (strain 287/91 / NCTC 13346).